A 377-amino-acid chain; its full sequence is Queuine tRNA-ribosyltransferase (377 aa).

The active-site Proton acceptor is Asp-92. Residues 92-96 (DSGGF), Asp-146, Gln-190, and Gly-217 contribute to the substrate site. Residues 248–254 (GVGRPED) are RNA binding. The active-site Nucleophile is Asp-267. The interval 272 to 276 (TRHAR) is RNA binding; important for wobble base 34 recognition. Zn(2+)-binding residues include Cys-305, Cys-307, Cys-310, and His-337.

This sequence belongs to the queuine tRNA-ribosyltransferase family. In terms of assembly, homodimer. Within each dimer, one monomer is responsible for RNA recognition and catalysis, while the other monomer binds to the replacement base PreQ1. It depends on Zn(2+) as a cofactor.

The enzyme catalyses 7-aminomethyl-7-carbaguanine + guanosine(34) in tRNA = 7-aminomethyl-7-carbaguanosine(34) in tRNA + guanine. It participates in tRNA modification; tRNA-queuosine biosynthesis. In terms of biological role, catalyzes the base-exchange of a guanine (G) residue with the queuine precursor 7-aminomethyl-7-deazaguanine (PreQ1) at position 34 (anticodon wobble position) in tRNAs with GU(N) anticodons (tRNA-Asp, -Asn, -His and -Tyr). Catalysis occurs through a double-displacement mechanism. The nucleophile active site attacks the C1' of nucleotide 34 to detach the guanine base from the RNA, forming a covalent enzyme-RNA intermediate. The proton acceptor active site deprotonates the incoming PreQ1, allowing a nucleophilic attack on the C1' of the ribose to form the product. After dissociation, two additional enzymatic reactions on the tRNA convert PreQ1 to queuine (Q), resulting in the hypermodified nucleoside queuosine (7-(((4,5-cis-dihydroxy-2-cyclopenten-1-yl)amino)methyl)-7-deazaguanosine). The sequence is that of Queuine tRNA-ribosyltransferase from Xylella fastidiosa (strain Temecula1 / ATCC 700964).